The sequence spans 345 residues: Phosphoribosylformylglycinamidine cyclo-ligase (345 aa).

Belongs to the AIR synthase family.

The protein resides in the cytoplasm. The enzyme catalyses 2-formamido-N(1)-(5-O-phospho-beta-D-ribosyl)acetamidine + ATP = 5-amino-1-(5-phospho-beta-D-ribosyl)imidazole + ADP + phosphate + H(+). Its pathway is purine metabolism; IMP biosynthesis via de novo pathway; 5-amino-1-(5-phospho-D-ribosyl)imidazole from N(2)-formyl-N(1)-(5-phospho-D-ribosyl)glycinamide: step 2/2. The polypeptide is Phosphoribosylformylglycinamidine cyclo-ligase (Shewanella sp. (strain MR-7)).